The primary structure comprises 570 residues: Urease subunit alpha (570 aa).

Residues 131 to 570 (GGFDSHIHFI…LPLAQRYFMF (440 aa)) enclose the Urease domain. H136, H138, and K219 together coordinate Ni(2+). K219 carries the post-translational modification N6-carboxylysine. H221 serves as a coordination point for substrate. The Ni(2+) site is built by H248 and H274. The Proton donor role is filled by H322. D362 is a Ni(2+) binding site.

The protein belongs to the metallo-dependent hydrolases superfamily. Urease alpha subunit family. Heterotrimer of UreA (gamma), UreB (beta) and UreC (alpha) subunits. Three heterotrimers associate to form the active enzyme. Requires Ni cation as cofactor. In terms of processing, carboxylation allows a single lysine to coordinate two nickel ions.

It is found in the cytoplasm. The enzyme catalyses urea + 2 H2O + H(+) = hydrogencarbonate + 2 NH4(+). It participates in nitrogen metabolism; urea degradation; CO(2) and NH(3) from urea (urease route): step 1/1. The polypeptide is Urease subunit alpha (Rhodopseudomonas palustris (strain TIE-1)).